A 431-amino-acid chain; its full sequence is Glutamyl-tRNA(Gln) amidotransferase subunit A (431 aa).

Residues Lys-55 and Ser-130 each act as charge relay system in the active site. Ser-154 serves as the catalytic Acyl-ester intermediate.

This sequence belongs to the amidase family. GatA subfamily. Heterotrimer of A, B and C subunits.

The catalysed reaction is L-glutamyl-tRNA(Gln) + L-glutamine + ATP + H2O = L-glutaminyl-tRNA(Gln) + L-glutamate + ADP + phosphate + H(+). In terms of biological role, allows the formation of correctly charged Gln-tRNA(Gln) through the transamidation of misacylated Glu-tRNA(Gln) in organisms which lack glutaminyl-tRNA synthetase. The reaction takes place in the presence of glutamine and ATP through an activated gamma-phospho-Glu-tRNA(Gln). This chain is Glutamyl-tRNA(Gln) amidotransferase subunit A, found in Methanococcus maripaludis (strain C7 / ATCC BAA-1331).